A 261-amino-acid chain; its full sequence is Hemin import ATP-binding protein HmuV (261 aa).

One can recognise an ABC transporter domain in the interval 3–239; it reads LDAADITVKL…AILSQAYGCA (237 aa). 35–42 contributes to the ATP binding site; it reads GPNGSGKT.

This sequence belongs to the ABC transporter superfamily. Heme (hemin) importer (TC 3.A.1.14.5) family. As to quaternary structure, the complex is composed of two ATP-binding proteins (HmuV), two transmembrane proteins (HmuU) and a solute-binding protein (HmuT).

It is found in the cell inner membrane. In terms of biological role, part of the ABC transporter complex HmuTUV involved in hemin import. Responsible for energy coupling to the transport system. The sequence is that of Hemin import ATP-binding protein HmuV from Roseobacter denitrificans (strain ATCC 33942 / OCh 114) (Erythrobacter sp. (strain OCh 114)).